The following is a 73-amino-acid chain: Small proline-rich protein 2G (73 aa).

Positions 1–11 are enriched in low complexity; that stretch reads MSYQQQQCKQP. The disordered stretch occupies residues 1–20; that stretch reads MSYQQQQCKQPCQPPPVCPT. A run of 3 repeats spans residues 21–29, 30–38, and 39–47. The interval 21–47 is 3 X 9 AA approximate tandem repeats; the sequence is PKCPEPCPPPKCPEPYLPPPCPPEHCP.

Belongs to the cornifin (SPRR) family.

The protein resides in the cytoplasm. Cross-linked envelope protein of keratinocytes. It is a keratinocyte protein that first appears in the cell cytosol, but ultimately becomes cross-linked to membrane proteins by transglutaminase. All that results in the formation of an insoluble envelope beneath the plasma membrane. The sequence is that of Small proline-rich protein 2G (SPRR2G) from Homo sapiens (Human).